A 525-amino-acid polypeptide reads, in one-letter code: Sucrose transport protein (525 aa).

Residues 1-37 (MAGRNIKNGENNKIAGSSLHLEKNPTTPPEAEATLKK) are Cytoplasmic-facing. 12 consecutive transmembrane segments (helical) span residues 38 to 58 (LGLV…QLSL), 72 to 92 (WAAY…PLVG), 107 to 127 (PFIA…GFAA), 145 to 165 (AIAV…TLQG), 184 to 204 (YANA…YAAG), 230 to 250 (SCFF…LSVV), 295 to 315 (MLIL…FLLF), 338 to 358 (GVHA…VMSL), 373 to 393 (LWGI…LVTK), 422 to 442 (LAIF…PFAL), 455 to 475 (GLSL…VSVT), and 488 to 508 (LPAF…SFTL). Over 509-525 (LPSPPPEAKIGGSMGGH) the chain is Cytoplasmic.

The protein belongs to the glycoside-pentoside-hexuronide (GPH) cation symporter transporter (TC 2.A.2.4) family.

The protein localises to the membrane. Its pathway is glycan biosynthesis; sucrose metabolism. Functionally, responsible for the transport of sucrose into the cell, with the concomitant uptake of protons (symport system). Can also transport maltose at a lesser rate. The chain is Sucrose transport protein from Spinacia oleracea (Spinach).